A 236-amino-acid chain; its full sequence is 5'-methylthioadenosine/S-adenosylhomocysteine nucleosidase (236 aa).

Catalysis depends on E12, which acts as the Proton acceptor. Substrate is bound by residues G78, I153, and 174-175; that span reads ME. The Proton donor role is filled by D198.

The protein belongs to the PNP/UDP phosphorylase family. MtnN subfamily.

It carries out the reaction S-adenosyl-L-homocysteine + H2O = S-(5-deoxy-D-ribos-5-yl)-L-homocysteine + adenine. The catalysed reaction is S-methyl-5'-thioadenosine + H2O = 5-(methylsulfanyl)-D-ribose + adenine. The enzyme catalyses 5'-deoxyadenosine + H2O = 5-deoxy-D-ribose + adenine. Its pathway is amino-acid biosynthesis; L-methionine biosynthesis via salvage pathway; S-methyl-5-thio-alpha-D-ribose 1-phosphate from S-methyl-5'-thioadenosine (hydrolase route): step 1/2. Its function is as follows. Catalyzes the irreversible cleavage of the glycosidic bond in both 5'-methylthioadenosine (MTA) and S-adenosylhomocysteine (SAH/AdoHcy) to adenine and the corresponding thioribose, 5'-methylthioribose and S-ribosylhomocysteine, respectively. Also cleaves 5'-deoxyadenosine, a toxic by-product of radical S-adenosylmethionine (SAM) enzymes, into 5-deoxyribose and adenine. The protein is 5'-methylthioadenosine/S-adenosylhomocysteine nucleosidase of Shewanella baltica (strain OS185).